The chain runs to 336 residues: 2-phospho-L-lactate transferase (336 aa).

Aspartate 49 lines the 7,8-didemethyl-8-hydroxy-5-deazariboflavin pocket.

This sequence belongs to the CofD family. Homodimer. Requires Mg(2+) as cofactor.

It carries out the reaction (2S)-lactyl-2-diphospho-5'-guanosine + 7,8-didemethyl-8-hydroxy-5-deazariboflavin = oxidized coenzyme F420-0 + GMP + H(+). It functions in the pathway cofactor biosynthesis; coenzyme F420 biosynthesis. Its function is as follows. Catalyzes the transfer of the 2-phospholactate moiety from (2S)-lactyl-2-diphospho-5'-guanosine to 7,8-didemethyl-8-hydroxy-5-deazariboflavin (FO) with the formation of oxidized coenzyme F420-0 and GMP. In Halobacterium salinarum (strain ATCC 700922 / JCM 11081 / NRC-1) (Halobacterium halobium), this protein is 2-phospho-L-lactate transferase.